The sequence spans 753 residues: Fatty acid oxidation complex subunit alpha (753 aa).

An enoyl-CoA hydratase region spans residues S8–P197. Positions R313–E747 are 3-hydroxyacyl-CoA dehydrogenase. Positions S593 to W622 are disordered. A compositionally biased stretch (low complexity) spans S599–P614.

It in the N-terminal section; belongs to the enoyl-CoA hydratase/isomerase family. This sequence in the central section; belongs to the 3-hydroxyacyl-CoA dehydrogenase family. In terms of assembly, heterotetramer of two alpha chains (FadJ) and two beta chains (FadI).

It localises to the cytoplasm. The enzyme catalyses a (3S)-3-hydroxyacyl-CoA = a (2E)-enoyl-CoA + H2O. The catalysed reaction is a 4-saturated-(3S)-3-hydroxyacyl-CoA = a (3E)-enoyl-CoA + H2O. It catalyses the reaction a (3S)-3-hydroxyacyl-CoA + NAD(+) = a 3-oxoacyl-CoA + NADH + H(+). It carries out the reaction (3S)-3-hydroxybutanoyl-CoA = (3R)-3-hydroxybutanoyl-CoA. The protein operates within lipid metabolism; fatty acid beta-oxidation. In terms of biological role, catalyzes the formation of a hydroxyacyl-CoA by addition of water on enoyl-CoA. Also exhibits 3-hydroxyacyl-CoA epimerase and 3-hydroxyacyl-CoA dehydrogenase activities. This Yersinia pseudotuberculosis serotype I (strain IP32953) protein is Fatty acid oxidation complex subunit alpha.